Here is a 319-residue protein sequence, read N- to C-terminus: Probable secreted beta-glucosidase C2G2.17c (319 aa).

The N-terminal stretch at 1–19 (MLFNNFLCFAVSAIPLVSA) is a signal peptide. 5 N-linked (GlcNAc...) asparagine glycosylation sites follow: Asn-36, Asn-39, Asn-45, Asn-48, and Asn-221.

The protein belongs to the SUN family.

It is found in the secreted. Its function is as follows. Cell surface beta-glucosidase involved in cell wall biogenesis. The sequence is that of Probable secreted beta-glucosidase C2G2.17c from Schizosaccharomyces pombe (strain 972 / ATCC 24843) (Fission yeast).